The following is a 60-amino-acid chain: MAVPRNRHSNARKNIRRSHHAKKARHAAVCNNCKQAFIPHTICTSCGFYNGKAVMTVEKK.

A disordered region spans residues 1–23 (MAVPRNRHSNARKNIRRSHHAKK).

This sequence belongs to the bacterial ribosomal protein bL32 family.

The chain is Large ribosomal subunit protein bL32 from Chlamydia caviae (strain ATCC VR-813 / DSM 19441 / 03DC25 / GPIC) (Chlamydophila caviae).